The chain runs to 144 residues: UPF0102 protein BPSL3274 (144 aa).

The segment at 1–28 (MCHAREASPGTGEPEAAPRDNFPREAGS) is disordered. Basic and acidic residues predominate over residues 16–28 (AAPRDNFPREAGS).

This sequence belongs to the UPF0102 family.

This is UPF0102 protein BPSL3274 from Burkholderia pseudomallei (strain K96243).